Reading from the N-terminus, the 106-residue chain is BLOC-1-related complex subunit 7 (106 aa).

This sequence belongs to the BORCS7 family. In terms of assembly, component of the BLOC-one-related complex (BORC) which is composed of BLOC1S1, BLOC1S2, BORCS5, BORCS6, BORCS7, BORCS8, KXD1 and SNAPIN.

It localises to the lysosome membrane. Its function is as follows. As part of the BORC complex may play a role in lysosomes movement and localization at the cell periphery. Associated with the cytosolic face of lysosomes, the BORC complex may recruit ARL8B and couple lysosomes to microtubule plus-end-directed kinesin motor. This is BLOC-1-related complex subunit 7 from Homo sapiens (Human).